The chain runs to 198 residues: Recombination protein RecR (198 aa).

The segment at 57–72 (CSICGNLTDDDPCHIC) adopts a C4-type zinc-finger fold. A Toprim domain is found at 80-175 (TTILVVEDAK…KVTRLARGLA (96 aa)).

This sequence belongs to the RecR family.

In terms of biological role, may play a role in DNA repair. It seems to be involved in an RecBC-independent recombinational process of DNA repair. It may act with RecF and RecO. This Streptococcus pyogenes serotype M5 (strain Manfredo) protein is Recombination protein RecR.